The primary structure comprises 338 residues: Ketol-acid reductoisomerase (NADP(+)) (338 aa).

Residues 1-181 (MKVFYDKDCD…GGGKAGIIET (181 aa)) enclose the KARI N-terminal Rossmann domain. Residues 24–27 (YGSQ), Arg-47, and Ser-52 contribute to the NADP(+) site. His-107 is an active-site residue. Residue Gly-133 participates in NADP(+) binding. In terms of domain architecture, KARI C-terminal knotted spans 182–327 (NFKEETETDL…AQLRAMMPWI (146 aa)). The Mg(2+) site is built by Asp-190, Glu-194, Glu-226, and Glu-230. Residue Ser-251 coordinates substrate.

Belongs to the ketol-acid reductoisomerase family. Requires Mg(2+) as cofactor.

The enzyme catalyses (2R)-2,3-dihydroxy-3-methylbutanoate + NADP(+) = (2S)-2-acetolactate + NADPH + H(+). It carries out the reaction (2R,3R)-2,3-dihydroxy-3-methylpentanoate + NADP(+) = (S)-2-ethyl-2-hydroxy-3-oxobutanoate + NADPH + H(+). It functions in the pathway amino-acid biosynthesis; L-isoleucine biosynthesis; L-isoleucine from 2-oxobutanoate: step 2/4. The protein operates within amino-acid biosynthesis; L-valine biosynthesis; L-valine from pyruvate: step 2/4. Its function is as follows. Involved in the biosynthesis of branched-chain amino acids (BCAA). Catalyzes an alkyl-migration followed by a ketol-acid reduction of (S)-2-acetolactate (S2AL) to yield (R)-2,3-dihydroxy-isovalerate. In the isomerase reaction, S2AL is rearranged via a Mg-dependent methyl migration to produce 3-hydroxy-3-methyl-2-ketobutyrate (HMKB). In the reductase reaction, this 2-ketoacid undergoes a metal-dependent reduction by NADPH to yield (R)-2,3-dihydroxy-isovalerate. The chain is Ketol-acid reductoisomerase (NADP(+)) from Acidovorax ebreus (strain TPSY) (Diaphorobacter sp. (strain TPSY)).